A 447-amino-acid chain; its full sequence is Maintenance of mitochondrial morphology protein 1 (447 aa).

At 1–109 (MKSPNETSFT…VFSAWSFAQG (109 aa)) the chain is on the lumenal side. Residues 110-130 (LVIGQLSVIVVLIFFIKFFIF) traverse the membrane as a helical segment. Over 131 to 447 (SEGPIKTEGP…DDISMKSTDL (317 aa)) the chain is Cytoplasmic. The 214-residue stretch at 208–421 (SPETLDWFNV…EPRFQFIKLP (214 aa)) folds into the SMP-LTD domain.

It belongs to the MMM1 family. In terms of assembly, homodimer. Component of the ER-mitochondria encounter structure (ERMES) or MDM complex, composed of MMM1, MDM10, MDM12 and MDM34. An MMM1 homodimer associates with one molecule of MDM12 on each side in a pairwise head-to-tail manner, and the SMP-LTD domains of MMM1 and MDM12 generate a continuous hydrophobic tunnel for phospholipid trafficking.

Its subcellular location is the endoplasmic reticulum membrane. Its function is as follows. Component of the ERMES/MDM complex, which serves as a molecular tether to connect the endoplasmic reticulum (ER) and mitochondria. Components of this complex are involved in the control of mitochondrial shape and protein biogenesis, and function in nonvesicular lipid trafficking between the ER and mitochondria. The MDM12-MMM1 subcomplex functions in the major beta-barrel assembly pathway that is responsible for biogenesis of all outer membrane beta-barrel proteins, and acts in a late step after the SAM complex. The MDM10-MDM12-MMM1 subcomplex further acts in the TOM40-specific pathway after the action of the MDM12-MMM1 complex. Essential for establishing and maintaining the structure of mitochondria and maintenance of mtDNA nucleoids. The sequence is that of Maintenance of mitochondrial morphology protein 1 from Lachancea thermotolerans (strain ATCC 56472 / CBS 6340 / NRRL Y-8284) (Yeast).